The chain runs to 67 residues: Large ribosomal subunit protein uL29 (67 aa).

Belongs to the universal ribosomal protein uL29 family.

This Sorangium cellulosum (strain So ce56) (Polyangium cellulosum (strain So ce56)) protein is Large ribosomal subunit protein uL29.